The sequence spans 350 residues: MPVLHNRISNDELKAKMLAESEPRTTISFYKYFTIASPQQTRDALYQVFTALDVFGRVYLAHEGINAQISVPQSKVETFRQQLYTFDPALDGLRLNIALEDDGKSFWVLRMKVRDRIVADGIDDPTFDASNVGDYLKAADVNAMLDDPDAVFIDMRNHYEYEVGHFENALEIPADTFREQLPKAVEMLREHADKKIVMYCTGGIRCEKASAWMKHNGFNKVWHIEGGIIEYARRAREQGLPVRFIGKNFVFDERMGERISDEVIAHCHQCGAPCDSHTNCKNDGCHLLFIQCPQCASKFNGCCSEQCCEELALPEEEQRRRRAGRENGNKIFNKSRGRLNSKLSIPDPAE.

Residues 146–240 (DDPDAVFIDM…YARRAREQGL (95 aa)) enclose the Rhodanese domain. Catalysis depends on Cys200, which acts as the Cysteine persulfide intermediate. Residues 319–328 (RRRRAGRENG) show a composition bias toward basic and acidic residues. The disordered stretch occupies residues 319–350 (RRRRAGRENGNKIFNKSRGRLNSKLSIPDPAE).

Belongs to the TrhO family.

The catalysed reaction is uridine(34) in tRNA + AH2 + O2 = 5-hydroxyuridine(34) in tRNA + A + H2O. Catalyzes oxygen-dependent 5-hydroxyuridine (ho5U) modification at position 34 in tRNAs. This chain is tRNA uridine(34) hydroxylase, found in Salmonella dublin (strain CT_02021853).